A 228-amino-acid polypeptide reads, in one-letter code: L-ribulose-5-phosphate 4-epimerase UlaF (228 aa).

Residues 26–27 (GN), 43–44 (SG), and 72–73 (SS) contribute to the substrate site. Zn(2+) contacts are provided by aspartate 74, histidine 93, and histidine 95. Aspartate 118 serves as the catalytic Proton donor/acceptor. A Zn(2+)-binding site is contributed by histidine 167. Catalysis depends on tyrosine 225, which acts as the Proton donor/acceptor.

The protein belongs to the aldolase class II family. AraD/FucA subfamily. It depends on Zn(2+) as a cofactor.

The enzyme catalyses L-ribulose 5-phosphate = D-xylulose 5-phosphate. It participates in cofactor degradation; L-ascorbate degradation; D-xylulose 5-phosphate from L-ascorbate: step 4/4. Its function is as follows. Catalyzes the isomerization of L-ribulose 5-phosphate to D-xylulose 5-phosphate. Is involved in the anaerobic L-ascorbate utilization. This is L-ribulose-5-phosphate 4-epimerase UlaF from Escherichia coli O45:K1 (strain S88 / ExPEC).